We begin with the raw amino-acid sequence, 89 residues long: Small ribosomal subunit protein uS15 (89 aa).

Belongs to the universal ribosomal protein uS15 family. As to quaternary structure, part of the 30S ribosomal subunit. Forms a bridge to the 50S subunit in the 70S ribosome, contacting the 23S rRNA.

Its function is as follows. One of the primary rRNA binding proteins, it binds directly to 16S rRNA where it helps nucleate assembly of the platform of the 30S subunit by binding and bridging several RNA helices of the 16S rRNA. In terms of biological role, forms an intersubunit bridge (bridge B4) with the 23S rRNA of the 50S subunit in the ribosome. The sequence is that of Small ribosomal subunit protein uS15 from Gluconacetobacter diazotrophicus (strain ATCC 49037 / DSM 5601 / CCUG 37298 / CIP 103539 / LMG 7603 / PAl5).